The following is a 551-amino-acid chain: Bestrophin-1 (551 aa).

Over 1–31 (MTITYTNKVANARLGSFSSLLLCWRGSIYKL) the chain is Cytoplasmic. Residue alanine 10 participates in Ca(2+) binding. The chain crosses the membrane as a helical span at residues 32–51 (LYGEFLVFIFLYYSIRGLYR). Residues 52–60 (MVLSSDQQL) lie on the Extracellular side of the membrane. Residues 61–82 (LFEKLALYCDSYIQLIPISFVL) traverse the membrane as a helical segment. The Cytoplasmic portion of the chain corresponds to 83 to 237 (GFYVTLVVSR…DWISIPLVYT (155 aa)). Residues 238–255 (QVVTVAVYSFFLACLIGR) form a helical membrane-spanning segment. Residues 256 to 274 (QFLNPNKDYPGHEMDLVVP) are Extracellular-facing. A helical membrane pass occupies residues 275 to 288 (VFTILQFLFYMGWL). The Cytoplasmic segment spans residues 289–551 (KVAEQLINPF…EAGTKPVLYE (263 aa)). Residues glutamine 293, asparagine 296, aspartate 301, and aspartate 304 each coordinate Ca(2+). The interval 346 to 379 (PYTAASARSRRHSFMGSTFNISLKKEDLELWSKE) is auto-inhibitory segment. Residues 459 to 489 (SHCGPQAPSSHPTEQSAPSSSDTGDGPSTDY) form a disordered region. The segment covering 465–475 (APSSHPTEQSA) has biased composition (polar residues). Over residues 476–488 (PSSSDTGDGPSTD) the composition is skewed to low complexity.

This sequence belongs to the anion channel-forming bestrophin (TC 1.A.46) family. Calcium-sensitive chloride channel subfamily. As to quaternary structure, interacts with YWHAG; this interaction promotes the ligand-gated L-glutamate channel activity leading to the positive regulation of NMDA glutamate receptor activity through the L-glutamate secretion.

It localises to the cell membrane. The protein resides in the basolateral cell membrane. The catalysed reaction is 4-aminobutanoate(in) = 4-aminobutanoate(out). It catalyses the reaction L-glutamate(out) = L-glutamate(in). The enzyme catalyses chloride(in) = chloride(out). It carries out the reaction hydrogencarbonate(in) = hydrogencarbonate(out). The catalysed reaction is D-serine(in) = D-serine(out). Inactivated by sulfhydryl-reactive agents. In terms of biological role, ligand-gated anion channel that allows the movement of anions across cell membranes when activated by calcium (Ca2+). Allows the movement of chloride and hydrogencarbonate. Found in a partially open conformation leading to significantly smaller chloride movement. Upon F2R/PAR-1 activation, the sequestered calcium is released into the cytosol of astrocytes, leading to the (Ca2+)-dependent release of L-glutamate into the synaptic cleft that targets the neuronal postsynaptic GRIN2A/NMDAR receptor resulting in the synaptic plasticity regulation. Upon activation of the norepinephrine-alpha-1 adrenergic receptor signaling pathway, transports as well D-serine than L-glutamate in a (Ca2+)-dependent manner, leading to activation of adjacent NMDAR receptors and therefore regulates the heterosynaptic long-term depression and metaplasticity during initial memory acquisition. Releases the 4-aminobutanoate neurotransmitter in a (Ca2+)-dependent manner, and participates in its tonic release from cerebellar glial cells. This is Bestrophin-1 from Mus musculus (Mouse).